We begin with the raw amino-acid sequence, 401 residues long: Deacetoxyvindoline 4-hydroxylase (401 aa).

The Fe2OG dioxygenase domain occupies 242–345 (CAEGLILLGH…SVAVAFGIKT (104 aa)). 3 residues coordinate Fe cation: His268, Asp270, and His324. Arg334 provides a ligand contact to 2-oxoglutarate.

Belongs to the iron/ascorbate-dependent oxidoreductase family. Monomer. Fe cation is required as a cofactor. The cofactor is L-ascorbate. Highest levels in leaves, lower levels in stems and fruits. Not expressed in flowers and roots.

It localises to the cytoplasm. It is found in the nucleus. The enzyme catalyses deacetoxyvindoline + 2-oxoglutarate + O2 = 4-O-deacetylvindoline + succinate + CO2. Its pathway is alkaloid biosynthesis; vindoline biosynthesis. Its function is as follows. Catalyzes the C4-hydroxylation of desacetoxyvindoline. In Catharanthus roseus (Madagascar periwinkle), this protein is Deacetoxyvindoline 4-hydroxylase.